A 345-amino-acid polypeptide reads, in one-letter code: NADH-ubiquinone oxidoreductase chain 2 (345 aa).

10 consecutive transmembrane segments (helical) span residues 1 to 21, 26 to 46, 60 to 80, 96 to 115, 122 to 144, 148 to 170, 201 to 223, 242 to 262, 274 to 294, and 323 to 343; these read MNPL…ILTT, WVSA…IISM, FLIQ…NAHL, IALT…HFWL, VPIL…LLIM, LIPT…LGGL, TLLN…HLTM, SLFL…GFIP, NLTP…MFYL, and TSTL…TPTL.

It belongs to the complex I subunit 2 family.

The protein resides in the mitochondrion inner membrane. The catalysed reaction is a ubiquinone + NADH + 5 H(+)(in) = a ubiquinol + NAD(+) + 4 H(+)(out). Core subunit of the mitochondrial membrane respiratory chain NADH dehydrogenase (Complex I) that is believed to belong to the minimal assembly required for catalysis. Complex I functions in the transfer of electrons from NADH to the respiratory chain. The immediate electron acceptor for the enzyme is believed to be ubiquinone. The protein is NADH-ubiquinone oxidoreductase chain 2 (MT-ND2) of Varanus nebulosus (Clouded monitor).